The primary structure comprises 462 residues: A-type ATP synthase subunit B (462 aa).

It belongs to the ATPase alpha/beta chains family. In terms of assembly, has multiple subunits with at least A(3), B(3), C, D, E, F, H, I and proteolipid K(x).

It localises to the cell membrane. Component of the A-type ATP synthase that produces ATP from ADP in the presence of a proton gradient across the membrane. The B chain is a regulatory subunit. This chain is A-type ATP synthase subunit B, found in Methanococcus maripaludis (strain C7 / ATCC BAA-1331).